A 331-amino-acid polypeptide reads, in one-letter code: 6-phosphogluconolactonase (331 aa).

This sequence belongs to the cycloisomerase 2 family.

The catalysed reaction is 6-phospho-D-glucono-1,5-lactone + H2O = 6-phospho-D-gluconate + H(+). It functions in the pathway carbohydrate degradation; pentose phosphate pathway; D-ribulose 5-phosphate from D-glucose 6-phosphate (oxidative stage): step 2/3. Functionally, catalyzes the hydrolysis of 6-phosphogluconolactone to 6-phosphogluconate. The polypeptide is 6-phosphogluconolactonase (Citrobacter koseri (strain ATCC BAA-895 / CDC 4225-83 / SGSC4696)).